Reading from the N-terminus, the 429-residue chain is Phosphoribosylamine--glycine ligase (429 aa).

The region spanning 109–316 is the ATP-grasp domain; that stretch reads KDFLARHQIP…LVDLCLAACD (208 aa). 135–196 serves as a coordination point for ATP; it reads LREKGAPIVI…EEFLDGEEAS (62 aa). Residues glutamate 286 and asparagine 288 each contribute to the Mg(2+) site.

The protein belongs to the GARS family. As to quaternary structure, monomer. The cofactor is Mg(2+). Mn(2+) is required as a cofactor.

It carries out the reaction 5-phospho-beta-D-ribosylamine + glycine + ATP = N(1)-(5-phospho-beta-D-ribosyl)glycinamide + ADP + phosphate + H(+). It functions in the pathway purine metabolism; IMP biosynthesis via de novo pathway; N(1)-(5-phospho-D-ribosyl)glycinamide from 5-phospho-alpha-D-ribose 1-diphosphate: step 2/2. This chain is Phosphoribosylamine--glycine ligase, found in Salmonella typhimurium (strain LT2 / SGSC1412 / ATCC 700720).